Reading from the N-terminus, the 148-residue chain is 3-dehydroquinate dehydratase (148 aa).

Residue Tyr23 is the Proton acceptor of the active site. Substrate contacts are provided by Asn75, His81, and Asp88. The active-site Proton donor is His101. Residues 102–103 (LS) and Arg112 contribute to the substrate site.

This sequence belongs to the type-II 3-dehydroquinase family. As to quaternary structure, homododecamer.

The catalysed reaction is 3-dehydroquinate = 3-dehydroshikimate + H2O. It functions in the pathway metabolic intermediate biosynthesis; chorismate biosynthesis; chorismate from D-erythrose 4-phosphate and phosphoenolpyruvate: step 3/7. Its function is as follows. Catalyzes a trans-dehydration via an enolate intermediate. This Xylella fastidiosa (strain 9a5c) protein is 3-dehydroquinate dehydratase.